The following is a 259-amino-acid chain: Imidazole glycerol phosphate synthase subunit HisF (259 aa).

Catalysis depends on residues D11 and D130.

This sequence belongs to the HisA/HisF family. Heterodimer of HisH and HisF.

It localises to the cytoplasm. The enzyme catalyses 5-[(5-phospho-1-deoxy-D-ribulos-1-ylimino)methylamino]-1-(5-phospho-beta-D-ribosyl)imidazole-4-carboxamide + L-glutamine = D-erythro-1-(imidazol-4-yl)glycerol 3-phosphate + 5-amino-1-(5-phospho-beta-D-ribosyl)imidazole-4-carboxamide + L-glutamate + H(+). It functions in the pathway amino-acid biosynthesis; L-histidine biosynthesis; L-histidine from 5-phospho-alpha-D-ribose 1-diphosphate: step 5/9. Its function is as follows. IGPS catalyzes the conversion of PRFAR and glutamine to IGP, AICAR and glutamate. The HisF subunit catalyzes the cyclization activity that produces IGP and AICAR from PRFAR using the ammonia provided by the HisH subunit. In Lactococcus lactis subsp. cremoris (strain MG1363), this protein is Imidazole glycerol phosphate synthase subunit HisF.